Here is a 2049-residue protein sequence, read N- to C-terminus: Nonribosomal peptide synthetase tcpP (2049 aa).

The tract at residues 13–395 is adenylation 1; the sequence is RHHAEAHPEA…LGRKDQLIKN (383 aa). The 77-residue stretch at 497-573 folds into the Carrier 1 domain; it reads ATADTKLSAL…EISNHIIEFD (77 aa). O-(pantetheine 4'-phosphoryl)serine is present on serine 534. Residues 605-913 are condensation 1; it reads REITMTDVQR…ALGSKMDLLS (309 aa). Positions 1071-1452 are adenylation 2; that stretch reads VAAWPMSVAL…GRADHQVKVR (382 aa). The Carrier 2 domain maps to 1550–1625; it reads DHTELVVSQV…SLAASVKKHL (76 aa). An O-(pantetheine 4'-phosphoryl)serine modification is found at serine 1585. A condensation 2 region spans residues 1662 to 2044; that stretch reads MHKQASNPSS…FEQEICNLLD (383 aa).

This sequence belongs to the NRP synthetase family.

Its pathway is secondary metabolite biosynthesis. Nonribosomal peptide synthetase; part of the gene cluster that mediates the biosynthesis of an unusual class of epipolythiodioxopiperazines (ETPs) lacking the reactive thiol group important for toxicity. Firstly, L-tyrosine is prenylated by tcpD, before undergoing condensation with L-glycine in a reaction catalyzed by the NRPS tcpP leading to the diketopiperazine (DKP) backbone. Afterwards the alpha-carbon of tyrosine is oxidized by the cytochrome P450 tcpC to form a hydroxyl group. However, in contrast other ETP biosynthesis pathways studied so far, tcpC is not able to bishydroxylate the DKP at both alpha-carbon positions, but hydroxylates the alpha-carbon of the tyrosine part and the nitrogen of the glycine part. The next steps involve an alpha,beta-elimination reaction catalyzed by tcpI, a methylation by the methyltransferase tcpN the action of the four enzyme cascade tcpG/K/J/I. Due to a dysfunctional cytochrome P450 monooxygenase tcpC, the pathway leads to the biosynthesis of probable non-toxic metabolites lacking the reactive thiol group. The protein is Nonribosomal peptide synthetase tcpP of Claviceps purpurea (strain 20.1) (Ergot fungus).